The chain runs to 223 residues: Thiamine-phosphate synthase (223 aa).

4-amino-2-methyl-5-(diphosphooxymethyl)pyrimidine-binding positions include 42–46 (QLRDK) and N83. The Mg(2+) site is built by D84 and D103. S122 is a binding site for 4-amino-2-methyl-5-(diphosphooxymethyl)pyrimidine. A 2-[(2R,5Z)-2-carboxy-4-methylthiazol-5(2H)-ylidene]ethyl phosphate-binding site is contributed by 148 to 150 (TPT). K151 contacts 4-amino-2-methyl-5-(diphosphooxymethyl)pyrimidine. A 2-[(2R,5Z)-2-carboxy-4-methylthiazol-5(2H)-ylidene]ethyl phosphate-binding site is contributed by G179.

This sequence belongs to the thiamine-phosphate synthase family. The cofactor is Mg(2+).

It catalyses the reaction 2-[(2R,5Z)-2-carboxy-4-methylthiazol-5(2H)-ylidene]ethyl phosphate + 4-amino-2-methyl-5-(diphosphooxymethyl)pyrimidine + 2 H(+) = thiamine phosphate + CO2 + diphosphate. The catalysed reaction is 2-(2-carboxy-4-methylthiazol-5-yl)ethyl phosphate + 4-amino-2-methyl-5-(diphosphooxymethyl)pyrimidine + 2 H(+) = thiamine phosphate + CO2 + diphosphate. It carries out the reaction 4-methyl-5-(2-phosphooxyethyl)-thiazole + 4-amino-2-methyl-5-(diphosphooxymethyl)pyrimidine + H(+) = thiamine phosphate + diphosphate. The protein operates within cofactor biosynthesis; thiamine diphosphate biosynthesis; thiamine phosphate from 4-amino-2-methyl-5-diphosphomethylpyrimidine and 4-methyl-5-(2-phosphoethyl)-thiazole: step 1/1. Condenses 4-methyl-5-(beta-hydroxyethyl)thiazole monophosphate (THZ-P) and 2-methyl-4-amino-5-hydroxymethyl pyrimidine pyrophosphate (HMP-PP) to form thiamine monophosphate (TMP). In Mycobacterium avium (strain 104), this protein is Thiamine-phosphate synthase.